The sequence spans 177 residues: Large ribosomal subunit protein uL6 (177 aa).

The protein belongs to the universal ribosomal protein uL6 family. In terms of assembly, part of the 50S ribosomal subunit.

Its function is as follows. This protein binds to the 23S rRNA, and is important in its secondary structure. It is located near the subunit interface in the base of the L7/L12 stalk, and near the tRNA binding site of the peptidyltransferase center. In Sphingopyxis alaskensis (strain DSM 13593 / LMG 18877 / RB2256) (Sphingomonas alaskensis), this protein is Large ribosomal subunit protein uL6.